The sequence spans 334 residues: MILGIESSCDDSSVALIDEETLEQIYYKKISQEEEHAIFGGVVPELAARLHTKALPALLNDILLNLKDINAIAVTNEPGLSVSLIGGVSMAKALSIALNIPLIAVNHLVGHIYSLFLDREATFPLGVLLVSGGHTMILEINENGEILELASTSDDSFGESFDKVAKMLDLGYPGGTVVQENALLCEDKDRFKFTVPLLHDKRLEYSFSGLKNQVRVEISKLKTITQKDIADICYAFENTACEHILNKLEKVFKLRNFKRFGVVGGASANLNLRKRLEVLCQKNVCELLLAPLEFCSDNALMIARAGREKYFKKEFINHSELTINPRVGFKKFEI.

2 residues coordinate Fe cation: His-107 and His-111. Substrate-binding positions include Leu-129 to Gly-133, Asp-162, Gly-175, and Asn-269. Asp-297 contacts Fe cation.

It belongs to the KAE1 / TsaD family. The cofactor is Fe(2+).

The protein resides in the cytoplasm. It catalyses the reaction L-threonylcarbamoyladenylate + adenosine(37) in tRNA = N(6)-L-threonylcarbamoyladenosine(37) in tRNA + AMP + H(+). In terms of biological role, required for the formation of a threonylcarbamoyl group on adenosine at position 37 (t(6)A37) in tRNAs that read codons beginning with adenine. Is involved in the transfer of the threonylcarbamoyl moiety of threonylcarbamoyl-AMP (TC-AMP) to the N6 group of A37, together with TsaE and TsaB. TsaD likely plays a direct catalytic role in this reaction. The polypeptide is tRNA N6-adenosine threonylcarbamoyltransferase (Campylobacter concisus (strain 13826)).